Here is a 223-residue protein sequence, read N- to C-terminus: Ubiquitin carboxyl-terminal hydrolase isozyme L1 (223 aa).

The residue at position 1 (methionine 1) is an N-acetylmethionine. The region spanning 2–221 (QLKPMEINPE…VRFSAVALCK (220 aa)) is the UCH catalytic domain. Residues 5–10 (PMEINP) form an interaction with ubiquitin region. Catalysis depends on cysteine 90, which acts as the Nucleophile. The residue at position 125 (serine 125) is a Phosphoserine. The active-site Proton donor is histidine 161. The tract at residues 211 to 216 (EVRFSA) is interaction with ubiquitin. The S-farnesyl cysteine moiety is linked to residue cysteine 220. The propeptide at 221–223 (KAA) is removed in mature form.

The protein belongs to the peptidase C12 family. In terms of assembly, monomer. Homodimer. Interacts with COPS5 and SNCA. O-glycosylated.

The protein resides in the cytoplasm. It is found in the endoplasmic reticulum membrane. It catalyses the reaction Thiol-dependent hydrolysis of ester, thioester, amide, peptide and isopeptide bonds formed by the C-terminal Gly of ubiquitin (a 76-residue protein attached to proteins as an intracellular targeting signal).. Functionally, ubiquitin-protein hydrolase involved both in the processing of ubiquitin precursors and of ubiquitinated proteins. This enzyme is a thiol protease that recognizes and hydrolyzes a peptide bond at the C-terminal glycine of ubiquitin. Also binds to free monoubiquitin and may prevent its degradation in lysosomes. The homodimer may have ATP-independent ubiquitin ligase activity. This chain is Ubiquitin carboxyl-terminal hydrolase isozyme L1 (UCHL1), found in Equus caballus (Horse).